The sequence spans 380 residues: Chorismate synthase (380 aa).

An NADP(+)-binding site is contributed by arginine 49. FMN is bound by residues glycine 288, 303–307 (KPPSS), and arginine 330.

The protein belongs to the chorismate synthase family. Requires FMNH2 as cofactor.

The catalysed reaction is 5-O-(1-carboxyvinyl)-3-phosphoshikimate = chorismate + phosphate. The protein operates within metabolic intermediate biosynthesis; chorismate biosynthesis; chorismate from D-erythrose 4-phosphate and phosphoenolpyruvate: step 7/7. Functionally, catalyzes the anti-1,4-elimination of the C-3 phosphate and the C-6 proR hydrogen from 5-enolpyruvylshikimate-3-phosphate (EPSP) to yield chorismate, which is the branch point compound that serves as the starting substrate for the three terminal pathways of aromatic amino acid biosynthesis. This reaction introduces a second double bond into the aromatic ring system. The polypeptide is Chorismate synthase (Aeropyrum pernix (strain ATCC 700893 / DSM 11879 / JCM 9820 / NBRC 100138 / K1)).